The chain runs to 71 residues: Bacteriocin carnobacteriocin-A (71 aa).

A propeptide spanning residues 1 to 18 (MNNVKELSIKEMQQVTGG) is cleaved from the precursor. Cys40 and Cys69 form a disulfide bridge.

The protein resides in the secreted. Has antibacterial activity. The chain is Bacteriocin carnobacteriocin-A (cbnBA) from Carnobacterium maltaromaticum (Carnobacterium piscicola).